The following is a 519-amino-acid chain: Aldehyde dehydrogenase, mitochondrial (519 aa).

Residues 1–19 constitute a mitochondrion transit peptide; the sequence is MLRAALSTARRGPRLSRLL. Positions 12–26 match the SIFI-degron motif; the sequence is GPRLSRLLSAAATSA. An N6-acetyllysine mark is found at Lys54, Lys75, Lys80, and Lys161. Position 264–269 (264–269) interacts with NAD(+); the sequence is GSTEVG. Glu287 acts as the Proton acceptor in catalysis. Catalysis depends on Cys321, which acts as the Nucleophile. N6-acetyllysine occurs at positions 370, 377, 385, 409, 428, 430, 443, and 453.

It belongs to the aldehyde dehydrogenase family. Homotetramer. In response to mitochondrial stress, the precursor protein is ubiquitinated by the SIFI complex in the cytoplasm before mitochondrial import, leading to its degradation. Within the SIFI complex, UBR4 initiates ubiquitin chain that are further elongated or branched by KCMF1.

The protein localises to the mitochondrion matrix. The enzyme catalyses an aldehyde + NAD(+) + H2O = a carboxylate + NADH + 2 H(+). Its pathway is alcohol metabolism; ethanol degradation; acetate from ethanol: step 2/2. Functionally, required for clearance of cellular formaldehyde, a cytotoxic and carcinogenic metabolite that induces DNA damage. This chain is Aldehyde dehydrogenase, mitochondrial (Aldh2), found in Rattus norvegicus (Rat).